A 355-amino-acid chain; its full sequence is Syntaxin-5 (355 aa).

Topologically, residues 1-333 (MIPRKRYGSK…KYFQSVTSNR (333 aa)) are cytoplasmic. The short motif at 245–247 (IDM) is the IxM motif; signal for cargo packaging into COPII-coated vesicles element. The t-SNARE coiled-coil homology domain maps to 263–325 (DSYIQSRADT…EAAHSEILKY (63 aa)). Residues 287 to 318 (FQQLAHMVKEQEETIQRIDENVLGAQLDVEAA) adopt a coiled-coil conformation. Residues 334 to 354 (WLMVKIFLILIVFFIIFVVFL) traverse the membrane as a helical; Anchor for type IV membrane protein segment. A355 is a topological domain (vesicular).

This sequence belongs to the syntaxin family. As to quaternary structure, part of a ternary complex containing STX5A, NSFL1C and VCP. Part of a unique SNARE complex composed of the Golgi SNAREs GOSR1, GOSR2 and YKT6. This complex also includes VTI1A. Component of a SNARE complex consisting of STX5, YKT6, GOSR1 and BET1L. Interacts with BET1L. Interacts with BET1. Interacts with COG4. Interacts with GM130/GOLGA2. Interacts (via IxM motif) with SEC24C and SEC24D; mediates STX5 packaging into COPII-coated vesicles. Interacts with VLDLR; this interaction mediates VLDLR translocation from the endoplasmic reticulum to the plasma membrane. As to expression, expressed in the brain, heart, spleen, lung, liver, kidney and testis.

Its subcellular location is the endoplasmic reticulum-Golgi intermediate compartment membrane. The protein localises to the golgi apparatus membrane. Mediates endoplasmic reticulum to Golgi transport. Together with p115/USO1 and GM130/GOLGA2, involved in vesicle tethering and fusion at the cis-Golgi membrane to maintain the stacked and inter-connected structure of the Golgi apparatus. Its function is as follows. Required for Golgi to endoplasmic reticulum retrogade transport, and for intra-Golgi transport. The chain is Syntaxin-5 (Stx5) from Rattus norvegicus (Rat).